A 79-amino-acid chain; its full sequence is UPF0181 protein PC1_1931 (79 aa).

The disordered stretch occupies residues 54–79 (FDEDDDTVNDSDEEHYFDDGEEEDEQ).

Belongs to the UPF0181 family.

The polypeptide is UPF0181 protein PC1_1931 (Pectobacterium carotovorum subsp. carotovorum (strain PC1)).